Here is a 461-residue protein sequence, read N- to C-terminus: L-seryl-tRNA(Sec) selenium transferase (461 aa).

K294 is subject to N6-(pyridoxal phosphate)lysine.

This sequence belongs to the SelA family. Pyridoxal 5'-phosphate is required as a cofactor.

It is found in the cytoplasm. It carries out the reaction L-seryl-tRNA(Sec) + selenophosphate + H(+) = L-selenocysteinyl-tRNA(Sec) + phosphate. Its pathway is aminoacyl-tRNA biosynthesis; selenocysteinyl-tRNA(Sec) biosynthesis; selenocysteinyl-tRNA(Sec) from L-seryl-tRNA(Sec) (bacterial route): step 1/1. Converts seryl-tRNA(Sec) to selenocysteinyl-tRNA(Sec) required for selenoprotein biosynthesis. This Actinobacillus pleuropneumoniae serotype 5b (strain L20) protein is L-seryl-tRNA(Sec) selenium transferase.